An 86-amino-acid polypeptide reads, in one-letter code: uncharacterized protein (86 aa).

This is an uncharacterized protein from Dictyostelium discoideum (Social amoeba).